Consider the following 1036-residue polypeptide: Vacuolar basic amino acid transporter VSB1 (1036 aa).

At 1-213 (MGRTIRRRRS…SKFAHYLPAA (213 aa)) the chain is on the vacuolar side. A phosphoserine mark is found at S42 and S127. T130 is subject to Phosphothreonine. A phosphoserine mark is found at S140, S144, S149, S152, and S153. A helical transmembrane segment spans residues 214-234 (VLGLLLNILDALSYGMIIFPI). Residues 235–236 (TE) are Cytoplasmic-facing. Residues 237 to 257 (PVFSHLGPTGISMFYISTIIS) form a helical membrane-spanning segment. The Vacuolar segment spans residues 258-269 (QAVYSGGWSSFP). Residues 270-290 (SGIGSEMIEITPFYHTMALAI) form a helical membrane-spanning segment. Residues 291–300 (KEALAGNDDE) lie on the Cytoplasmic side of the membrane. A helical transmembrane segment spans residues 301 to 321 (IITTTIFCYVISSMLTGVVFY). Residues 322–338 (ALGKLRLGKIVGFFPRH) are Vacuolar-facing. The helical transmembrane segment at 339–359 (ILIGCIGGVGYFLIITGIEVT) threads the bilayer. Over 360-375 (TRVAKFEYSWPFFSGL) the chain is Cytoplasmic. A helical membrane pass occupies residues 376 to 396 (FTDYDTLAKWLLPVLLTVVLI). Residues 397–405 (GTQRYFKNS) lie on the Vacuolar side of the membrane. A helical transmembrane segment spans residues 406–426 (LVLPSFYILTLVLFHFIVAII). Topologically, residues 427–473 (PTLSLDALRQAGWIFPIANSDSKWYDHYRLFNVHKVHWSLVLQQIPT) are cytoplasmic. A helical membrane pass occupies residues 474-494 (MMALTFFGILHVPINVPALAM). The Vacuolar segment spans residues 495-515 (SLQMDKYDVDRELIAHGYSNF). A helical membrane pass occupies residues 516–536 (FSGLLGSVQNYLVYTNSVLFI). The Cytoplasmic portion of the chain corresponds to 537–546 (RAGADSPFAG). Residues 547–567 (FLLIALTICIMIIGPVIISFI) traverse the membrane as a helical segment. Position 568 (P568) is a topological domain, vacuolar. Residues 569–589 (ICIVGSLIFLLGYELLVEALV) traverse the membrane as a helical segment. At 590–604 (DTWNKLNRFEYLTVV) the chain is on the cytoplasmic side. Residues 605 to 625 (IIVFTMGIFDFVLGIIVGILI) form a helical membrane-spanning segment. Residues 626–664 (ACFSFLVDSTKLQTINGEYNGNVARSTVYRDYVQTKFLD) lie on the Vacuolar side of the membrane. The 122-residue stretch at 660–781 (TKFLDGIGEQ…ADLNSALEWC (122 aa)) folds into the STAS domain. A helical membrane pass occupies residues 665-685 (GIGEQIYVLKLQNLLFFGTII). Over 686–1036 (SIEEKIERLL…ELLGYTLVSA (351 aa)) the chain is Cytoplasmic. S842 carries the post-translational modification Phosphoserine. A Phosphothreonine modification is found at T847.

It localises to the vacuole membrane. In terms of biological role, amino acid transporter involved in vacuolar uptake of basic amino acids for storage during nitrogen replete condititions. May function as an amino acid/proton antiporter. This chain is Vacuolar basic amino acid transporter VSB1, found in Saccharomyces cerevisiae (strain ATCC 204508 / S288c) (Baker's yeast).